Consider the following 706-residue polypeptide: MLMTASQQDQHAKMYLADIHRALRIPSPIPSTDYECSDYASTIASISRESTMRNFNRSNISSTAPSFAESEDAEDGDSFPYDQTLSNSSSFDDHQSLLPFSTEVRRTPTYSVMNETDSSSTSVEDVNKENILSLNDSCLIKLSDDEASNKSSRSSTPRNSIKSNSSNQGHGDIPIPKKNPARSVCNSKLFNEDTLPAEFEEVSISPPVKLELPTHSHNSSDTSFTNSIVSSVSDMVGLGEGINSIASFGFSEDSSSFQDIKTPPRLSFADENRENCRTDIYRSDSIHEYEEPLTSSITSLDSPHVLDENAPIPLLPKVVSLPDPRFTNVLSAFDALTRTYLLRQNSKVVHATSQKQEMQTSRRVVNSCYMPESLSRNLSSSLQQTGGSGRLFVRLMEIRNLTIPLASGMTTRFTYTISGKHIQVPWNALHSTTKIENEYTFDESISSSIVCTLRAAYDPPKVRTRSTLGKVFSTNKRKSMTTDPVSEALHGFVSEDGTFGEVTINTDSVSRTALGRCQSMVLPIMNKWTVDPAAKDVKPLPRKVGELEIHVFFLPALPVSLKELPASIESAMYDLKLAEWDRTLLCDGYLCQQGGDCPYWRRRYFQLIGSKLVAFQQFSKVRRATIDLSEATHIVDDNHYSDEEELEGYLYFESGFRIIFSNGDYIDFYAETVGEKDEWMSTLRQHLGQCSMVHKNWTKSFLSLSF.

Disordered regions lie at residues 62 to 102 (STAP…PFST) and 145 to 180 (DEAS…KKNP). Composition is skewed to polar residues over residues 81-90 (YDQTLSNSSS) and 149-169 (NKSS…SNQG). Phosphoserine is present on serine 379. One can recognise a PH domain in the interval 583 to 688 (TLLCDGYLCQ…WMSTLRQHLG (106 aa)).

This sequence belongs to the BUD4 family.

It is found in the cytoplasm. The protein resides in the cell cortex. The protein localises to the cytoskeleton. Responsible for the proper stability and function of septins during cytokinesis. Required for the correct formation of the medial septin ring structure in mitosis and for the proper localization of endo-glucanases agn1 and eng1, which are needed for efficient cell separation. May act as a landmark for the localization of hydrolytic proteins to the medial region. This chain is Septin ring organizing protein mid2 (mid2), found in Schizosaccharomyces pombe (strain 972 / ATCC 24843) (Fission yeast).